A 1011-amino-acid polypeptide reads, in one-letter code: Antigenic heat-stable 120 kDa protein (1011 aa).

3 disordered regions span residues 1–37, 54–73, and 348–396; these read DTSEFDPLANKEYTEEQKQTEEQEQKEFLSQTTTPAL, TPSMSALSGNISPDSQTSDP, and GQSK…PQSQ. The segment covering 12–27 has biased composition (basic and acidic residues); sequence EYTEEQKQTEEQEQKE. 2 stretches are compositionally biased toward polar residues: residues 348-373 and 380-396; these read GQSKEQPLITPQQTTSSSVEPPQYKQ and PTNQPLQPETSQMPQSQ.

Its subcellular location is the cytoplasm. In Rickettsia sibirica subsp. mongolitimonae (Rickettsia mongolotimonae), this protein is Antigenic heat-stable 120 kDa protein (sca4).